Consider the following 284-residue polypeptide: D-tagatose-1,6-bisphosphate aldolase subunit GatY (284 aa).

The active-site Proton donor is the aspartate 82. Residues histidine 83 and histidine 180 each contribute to the Zn(2+) site. Glycine 181 is a binding site for dihydroxyacetone phosphate. Residue histidine 208 participates in Zn(2+) binding. Dihydroxyacetone phosphate-binding positions include 209–211 and 230–233; these read GAS and NVAT.

Belongs to the class II fructose-bisphosphate aldolase family. TagBP aldolase GatY subfamily. In terms of assembly, forms a complex with GatZ. Zn(2+) serves as cofactor.

The enzyme catalyses D-tagatofuranose 1,6-bisphosphate = D-glyceraldehyde 3-phosphate + dihydroxyacetone phosphate. It functions in the pathway carbohydrate metabolism; D-tagatose 6-phosphate degradation; D-glyceraldehyde 3-phosphate and glycerone phosphate from D-tagatose 6-phosphate: step 2/2. Catalytic subunit of the tagatose-1,6-bisphosphate aldolase GatYZ, which catalyzes the reversible aldol condensation of dihydroxyacetone phosphate (DHAP or glycerone-phosphate) with glyceraldehyde 3-phosphate (G3P) to produce tagatose 1,6-bisphosphate (TBP). Requires GatZ subunit for full activity and stability. Is involved in the catabolism of galactitol. The sequence is that of D-tagatose-1,6-bisphosphate aldolase subunit GatY from Salmonella enteritidis PT4 (strain P125109).